We begin with the raw amino-acid sequence, 482 residues long: UDP-N-acetylmuramoyl-L-alanyl-D-glutamate--2,6-diaminopimelate ligase (482 aa).

Position 29 (Ser-29) interacts with UDP-N-acetyl-alpha-D-muramoyl-L-alanyl-D-glutamate. 109–115 (GTNGKTS) serves as a coordination point for ATP. Residues 151–152 (TT), Ser-178, and Arg-186 each bind UDP-N-acetyl-alpha-D-muramoyl-L-alanyl-D-glutamate. Lys-218 carries the N6-carboxylysine modification. Meso-2,6-diaminopimelate-binding positions include Arg-375, 399–402 (DNPR), Gly-451, and Glu-455. Positions 399 to 402 (DNPR) match the Meso-diaminopimelate recognition motif motif.

It belongs to the MurCDEF family. MurE subfamily. The cofactor is Mg(2+). In terms of processing, carboxylation is probably crucial for Mg(2+) binding and, consequently, for the gamma-phosphate positioning of ATP.

Its subcellular location is the cytoplasm. It carries out the reaction UDP-N-acetyl-alpha-D-muramoyl-L-alanyl-D-glutamate + meso-2,6-diaminopimelate + ATP = UDP-N-acetyl-alpha-D-muramoyl-L-alanyl-gamma-D-glutamyl-meso-2,6-diaminopimelate + ADP + phosphate + H(+). It functions in the pathway cell wall biogenesis; peptidoglycan biosynthesis. In terms of biological role, catalyzes the addition of meso-diaminopimelic acid to the nucleotide precursor UDP-N-acetylmuramoyl-L-alanyl-D-glutamate (UMAG) in the biosynthesis of bacterial cell-wall peptidoglycan. In Caldanaerobacter subterraneus subsp. tengcongensis (strain DSM 15242 / JCM 11007 / NBRC 100824 / MB4) (Thermoanaerobacter tengcongensis), this protein is UDP-N-acetylmuramoyl-L-alanyl-D-glutamate--2,6-diaminopimelate ligase.